The chain runs to 227 residues: CDP-diacylglycerol--inositol 3-phosphatidyltransferase 1 (227 aa).

2 helical membrane passes run 12 to 36 (LSVYLYIPNIVGYMRVLLNCVAFAV) and 42 to 61 (PLFSVLYFFSFCCDAVDGWV). Mg(2+)-binding residues include D55 and D58. G59, R63, and S69 together coordinate a CDP-1,2-diacyl-sn-glycerol. 4 consecutive transmembrane segments (helical) span residues 73-95 (AVLDMVTDRVSTACLLVILSQIY), 101-122 (FLSLLALDIASHWLQMYSTFLA), 142-165 (YGNRIFMCYCCVSCEVLYIILLLI), and 177-200 (VVATLTQISPLSFLLALTLFGWSM). Mg(2+)-binding residues include D76 and D80. The active-site Proton acceptor is D80.

This sequence belongs to the CDP-alcohol phosphatidyltransferase class-I family. The cofactor is Mg(2+). Requires Mn(2+) as cofactor. In terms of tissue distribution, expressed in stems, flowers, shoots and roots. Present in epidermal tissues.

The protein localises to the membrane. It catalyses the reaction a CDP-1,2-diacyl-sn-glycerol + myo-inositol = a 1,2-diacyl-sn-glycero-3-phospho-(1D-myo-inositol) + CMP + H(+). Functionally, catalyzes the biosynthesis of phosphatidylinositol (PtdIns) as well as PtdIns:inositol exchange reaction. May thus act to reduce an excessive cellular PtdIns content. The exchange activity is due to the reverse reaction of PtdIns synthase and is dependent on CMP, which is tightly bound to the enzyme. This chain is CDP-diacylglycerol--inositol 3-phosphatidyltransferase 1 (PIS1), found in Arabidopsis thaliana (Mouse-ear cress).